The chain runs to 500 residues: V-type proton ATPase subunit B (500 aa).

The protein belongs to the ATPase alpha/beta chains family. As to quaternary structure, V-ATPase is a heteromultimeric enzyme composed of a peripheral catalytic V1 complex (main components: subunits A, B, C, D, E, and F) attached to an integral membrane V0 proton pore complex (main component: the proteolipid protein).

In terms of biological role, non-catalytic subunit of the peripheral V1 complex of vacuolar ATPase. V-ATPase is responsible for acidifying a variety of intracellular compartments in eukaryotic cells. The polypeptide is V-type proton ATPase subunit B (Cyanidium caldarium (Red alga)).